The primary structure comprises 475 residues: tRNA-2-methylthio-N(6)-dimethylallyladenosine synthase (475 aa).

Positions 3–120 (KKLHIKTWGC…LPEMIDQIKD (118 aa)) constitute an MTTase N-terminal domain. The [4Fe-4S] cluster site is built by Cys-12, Cys-49, Cys-83, Cys-157, Cys-161, and Cys-164. One can recognise a Radical SAM core domain in the interval 143-375 (RAEGPSAFVS…QDRITQQAMR (233 aa)). One can recognise a TRAM domain in the interval 378-441 (RQMVGTVQRI…TNSLRGVFIR (64 aa)).

This sequence belongs to the methylthiotransferase family. MiaB subfamily. Monomer. [4Fe-4S] cluster serves as cofactor.

The protein localises to the cytoplasm. It carries out the reaction N(6)-dimethylallyladenosine(37) in tRNA + (sulfur carrier)-SH + AH2 + 2 S-adenosyl-L-methionine = 2-methylsulfanyl-N(6)-dimethylallyladenosine(37) in tRNA + (sulfur carrier)-H + 5'-deoxyadenosine + L-methionine + A + S-adenosyl-L-homocysteine + 2 H(+). Functionally, catalyzes the methylthiolation of N6-(dimethylallyl)adenosine (i(6)A), leading to the formation of 2-methylthio-N6-(dimethylallyl)adenosine (ms(2)i(6)A) at position 37 in tRNAs that read codons beginning with uridine. The sequence is that of tRNA-2-methylthio-N(6)-dimethylallyladenosine synthase from Shewanella pealeana (strain ATCC 700345 / ANG-SQ1).